The primary structure comprises 128 residues: Sulfurtransferase TusD (128 aa).

The active-site Cysteine persulfide intermediate is the C78.

It belongs to the DsrE/TusD family. Heterohexamer, formed by a dimer of trimers. The hexameric TusBCD complex contains 2 copies each of TusB, TusC and TusD. The TusBCD complex interacts with TusE.

The protein localises to the cytoplasm. In terms of biological role, part of a sulfur-relay system required for 2-thiolation of 5-methylaminomethyl-2-thiouridine (mnm(5)s(2)U) at tRNA wobble positions. Accepts sulfur from TusA and transfers it in turn to TusE. This Escherichia coli (strain K12 / MC4100 / BW2952) protein is Sulfurtransferase TusD.